The following is a 340-amino-acid chain: MIFIDACFKKPTPYTPIWMMRQAGRYLPEYMEVRKQAGDFLSLCKDYKKASEVSLQPIDILDVDAAIIFSDILVVPLEMGMNLRFEKGEGPVFGNPISTLEDLEKLDDQNAHKKLNYVYDALKLTREKLSQNKALIGFCGSPWTIATYMIEGSGSKNYAKCKKMLYQNPELLHKILNKLTQVLKLYLEEQIKAGANAIQIFDSWASALEYDKFFEFSFNYMLEISNFIKSKYPNIPVILFPKGISGYLDRIDGNFDVFGVDWSTPLDLARDKLSHKYTLQGNMEPCRLYDKNAIKEGVEKILKTMQNKAHIFNLGHGILPDIPVENAKYFIKLVQESSAK.

Residues 21–25, Phe40, Asp71, Tyr148, Ser203, and His316 contribute to the substrate site; that span reads RQAGR.

It belongs to the uroporphyrinogen decarboxylase family. As to quaternary structure, homodimer.

It is found in the cytoplasm. It catalyses the reaction uroporphyrinogen III + 4 H(+) = coproporphyrinogen III + 4 CO2. The protein operates within porphyrin-containing compound metabolism; protoporphyrin-IX biosynthesis; coproporphyrinogen-III from 5-aminolevulinate: step 4/4. Catalyzes the decarboxylation of four acetate groups of uroporphyrinogen-III to yield coproporphyrinogen-III. The polypeptide is Uroporphyrinogen decarboxylase (Campylobacter jejuni subsp. jejuni serotype O:2 (strain ATCC 700819 / NCTC 11168)).